A 483-amino-acid chain; its full sequence is Protein nucleotidyltransferase YdiU (483 aa).

Gly81, Gly83, Arg84, Lys103, Asp115, Gly116, Arg166, and Arg173 together coordinate ATP. The Proton acceptor role is filled by Asp244. Asn245 and Asp254 together coordinate Mg(2+). Asp254 contacts ATP.

It belongs to the SELO family. Mg(2+) is required as a cofactor. It depends on Mn(2+) as a cofactor.

The enzyme catalyses L-seryl-[protein] + ATP = 3-O-(5'-adenylyl)-L-seryl-[protein] + diphosphate. It carries out the reaction L-threonyl-[protein] + ATP = 3-O-(5'-adenylyl)-L-threonyl-[protein] + diphosphate. The catalysed reaction is L-tyrosyl-[protein] + ATP = O-(5'-adenylyl)-L-tyrosyl-[protein] + diphosphate. It catalyses the reaction L-histidyl-[protein] + UTP = N(tele)-(5'-uridylyl)-L-histidyl-[protein] + diphosphate. The enzyme catalyses L-seryl-[protein] + UTP = O-(5'-uridylyl)-L-seryl-[protein] + diphosphate. It carries out the reaction L-tyrosyl-[protein] + UTP = O-(5'-uridylyl)-L-tyrosyl-[protein] + diphosphate. Functionally, nucleotidyltransferase involved in the post-translational modification of proteins. It can catalyze the addition of adenosine monophosphate (AMP) or uridine monophosphate (UMP) to a protein, resulting in modifications known as AMPylation and UMPylation. The chain is Protein nucleotidyltransferase YdiU from Shewanella pealeana (strain ATCC 700345 / ANG-SQ1).